A 286-amino-acid chain; its full sequence is ATP synthase gamma chain (286 aa).

This sequence belongs to the ATPase gamma chain family. As to quaternary structure, F-type ATPases have 2 components, CF(1) - the catalytic core - and CF(0) - the membrane proton channel. CF(1) has five subunits: alpha(3), beta(3), gamma(1), delta(1), epsilon(1). CF(0) has three main subunits: a, b and c.

It is found in the cell inner membrane. In terms of biological role, produces ATP from ADP in the presence of a proton gradient across the membrane. The gamma chain is believed to be important in regulating ATPase activity and the flow of protons through the CF(0) complex. This chain is ATP synthase gamma chain, found in Pseudoalteromonas atlantica (strain T6c / ATCC BAA-1087).